We begin with the raw amino-acid sequence, 187 residues long: Elongation factor P (187 aa).

Lysine 33 bears the N6-(3,6-diaminohexanoyl)-5-hydroxylysine mark.

The protein belongs to the elongation factor P family. In terms of processing, may be beta-lysylated on the epsilon-amino group of Lys-33 by the combined action of EpmA and EpmB, and then hydroxylated on the C5 position of the same residue by EpmC (if this protein is present). Lysylation is critical for the stimulatory effect of EF-P on peptide-bond formation. The lysylation moiety may extend toward the peptidyltransferase center and stabilize the terminal 3-CCA end of the tRNA. Hydroxylation of the C5 position on Lys-33 may allow additional potential stabilizing hydrogen-bond interactions with the P-tRNA.

It is found in the cytoplasm. It functions in the pathway protein biosynthesis; polypeptide chain elongation. Involved in peptide bond synthesis. Alleviates ribosome stalling that occurs when 3 or more consecutive Pro residues or the sequence PPG is present in a protein, possibly by augmenting the peptidyl transferase activity of the ribosome. Modification of Lys-33 is required for alleviation. This chain is Elongation factor P, found in Blochmanniella floridana.